We begin with the raw amino-acid sequence, 88 residues long: MLSRRTKTIVVCTLVCMARLNVYVPDELAERARARGLNVSALTQAAISAELENSATDAWLEGLEPRSTGARHDDVLGAIDAARDEFEA.

Its function is as follows. Antitoxin component of a type II toxin-antitoxin (TA) system. The chain is Antitoxin VapB3 (vapB3) from Mycobacterium tuberculosis (strain CDC 1551 / Oshkosh).